The primary structure comprises 472 residues: Adenosylhomocysteinase (472 aa).

The substrate site is built by Thr64, Asp138, and Glu198. 199 to 201 (TTT) serves as a coordination point for NAD(+). The substrate site is built by Lys228 and Asp232. Residues Asn233, 262 to 267 (GFGDVG), Glu285, Asn320, 341 to 343 (IGH), and Asn386 contribute to the NAD(+) site.

Belongs to the adenosylhomocysteinase family. It depends on NAD(+) as a cofactor.

It localises to the cytoplasm. The catalysed reaction is S-adenosyl-L-homocysteine + H2O = L-homocysteine + adenosine. Its pathway is amino-acid biosynthesis; L-homocysteine biosynthesis; L-homocysteine from S-adenosyl-L-homocysteine: step 1/1. Its function is as follows. May play a key role in the regulation of the intracellular concentration of adenosylhomocysteine. The polypeptide is Adenosylhomocysteinase (Prochlorococcus marinus (strain MIT 9301)).